Consider the following 61-residue polypeptide: Protein translocase subunit SecE (61 aa).

Residues 39–59 (LGILVIGLVGMLIRIIGILML) traverse the membrane as a helical segment.

This sequence belongs to the SecE/SEC61-gamma family. In terms of assembly, component of the Sec protein translocase complex. Heterotrimer consisting of SecY (alpha), SecG (beta) and SecE (gamma) subunits. The heterotrimers can form oligomers, although 1 heterotrimer is thought to be able to translocate proteins. Interacts with the ribosome. May interact with SecDF, and other proteins may be involved.

It is found in the cell membrane. In terms of biological role, essential subunit of the Sec protein translocation channel SecYEG. Clamps together the 2 halves of SecY. May contact the channel plug during translocation. This is Protein translocase subunit SecE from Pyrococcus horikoshii (strain ATCC 700860 / DSM 12428 / JCM 9974 / NBRC 100139 / OT-3).